Here is a 360-residue protein sequence, read N- to C-terminus: uncharacterized protein (360 aa).

An ABC transporter domain is found at 4–235; that stretch reads LSLQHIQKIY…PANMFVSGFI (232 aa). ATP is bound at residue 37 to 44; sequence GPSGCGKS.

Belongs to the ABC transporter superfamily.

This is an uncharacterized protein from Escherichia coli (strain K12).